A 339-amino-acid chain; its full sequence is Dihydroorotate dehydrogenase (quinone) (339 aa).

Residues 61-65 (AGLDK) and T85 contribute to the FMN site. K65 provides a ligand contact to substrate. Substrate is bound at residue 110–114 (NRMGF). 2 residues coordinate FMN: N138 and N171. N171 is a binding site for substrate. S174 (nucleophile) is an active-site residue. Position 176 (N176) interacts with substrate. The FMN site is built by K216 and T244. 245 to 246 (NT) contacts substrate. FMN-binding positions include G267, G296, and 317-318 (YS).

It belongs to the dihydroorotate dehydrogenase family. Type 2 subfamily. Monomer. FMN is required as a cofactor.

It localises to the cell membrane. It catalyses the reaction (S)-dihydroorotate + a quinone = orotate + a quinol. Its pathway is pyrimidine metabolism; UMP biosynthesis via de novo pathway; orotate from (S)-dihydroorotate (quinone route): step 1/1. Functionally, catalyzes the conversion of dihydroorotate to orotate with quinone as electron acceptor. In Pseudomonas fluorescens (strain ATCC BAA-477 / NRRL B-23932 / Pf-5), this protein is Dihydroorotate dehydrogenase (quinone).